The sequence spans 360 residues: Phenylalanine--tRNA ligase alpha subunit (360 aa).

A Mg(2+)-binding site is contributed by glutamate 260.

The protein belongs to the class-II aminoacyl-tRNA synthetase family. Phe-tRNA synthetase alpha subunit type 1 subfamily. Tetramer of two alpha and two beta subunits. The cofactor is Mg(2+).

Its subcellular location is the cytoplasm. It carries out the reaction tRNA(Phe) + L-phenylalanine + ATP = L-phenylalanyl-tRNA(Phe) + AMP + diphosphate + H(+). The chain is Phenylalanine--tRNA ligase alpha subunit from Agrobacterium fabrum (strain C58 / ATCC 33970) (Agrobacterium tumefaciens (strain C58)).